A 364-amino-acid chain; its full sequence is Protein MGF 360-18R (364 aa).

It belongs to the asfivirus MGF 360 family.

In terms of biological role, plays a role in virus cell tropism, and may be required for efficient virus replication in macrophages. This chain is Protein MGF 360-18R, found in African swine fever virus (isolate Tick/South Africa/Pretoriuskop Pr4/1996) (ASFV).